The primary structure comprises 216 residues: Ras-related protein RABA1c (216 aa).

20-27 (GDSGVGKS) lines the GTP pocket. The Effector region signature appears at 42-50 (SKSTIGVEF). GTP-binding positions include 68–72 (DTAGQ), 126–129 (NKSD), and 156–157 (SA). S-geranylgeranyl cysteine attachment occurs at residues cysteine 213 and cysteine 214.

It belongs to the small GTPase superfamily. Rab family.

The protein localises to the cell membrane. In terms of biological role, intracellular vesicle trafficking and protein transport. The chain is Ras-related protein RABA1c (RABA1C) from Arabidopsis thaliana (Mouse-ear cress).